The chain runs to 331 residues: Glyceraldehyde-3-phosphate dehydrogenase (331 aa).

Residues 10 to 11 (RI), D31, K75, and T117 contribute to the NAD(+) site. Residues 148-150 (SCT) and T179 each bind D-glyceraldehyde 3-phosphate. C149 serves as the catalytic Nucleophile. NAD(+) is bound at residue N180. Residues R194, 207–208 (TG), and R230 contribute to the D-glyceraldehyde 3-phosphate site. An NAD(+)-binding site is contributed by N311.

This sequence belongs to the glyceraldehyde-3-phosphate dehydrogenase family. In terms of assembly, homotetramer.

It localises to the cytoplasm. The enzyme catalyses D-glyceraldehyde 3-phosphate + phosphate + NAD(+) = (2R)-3-phospho-glyceroyl phosphate + NADH + H(+). The protein operates within carbohydrate degradation; glycolysis; pyruvate from D-glyceraldehyde 3-phosphate: step 1/5. Functionally, catalyzes the oxidative phosphorylation of glyceraldehyde 3-phosphate (G3P) to 1,3-bisphosphoglycerate (BPG) using the cofactor NAD. The first reaction step involves the formation of a hemiacetal intermediate between G3P and a cysteine residue, and this hemiacetal intermediate is then oxidized to a thioester, with concomitant reduction of NAD to NADH. The reduced NADH is then exchanged with the second NAD, and the thioester is attacked by a nucleophilic inorganic phosphate to produce BPG. This chain is Glyceraldehyde-3-phosphate dehydrogenase (gap), found in Thermus aquaticus.